The chain runs to 84 residues: Translational regulator CsrA (84 aa).

Belongs to the CsrA/RsmA family. As to quaternary structure, homodimer; the beta-strands of each monomer intercalate to form a hydrophobic core, while the alpha-helices form wings that extend away from the core.

The protein resides in the cytoplasm. A translational regulator that binds mRNA to regulate translation initiation and/or mRNA stability. Usually binds in the 5'-UTR at or near the Shine-Dalgarno sequence preventing ribosome-binding, thus repressing translation. Its main target seems to be the major flagellin gene, while its function is anatagonized by FliW. The protein is Translational regulator CsrA of Leptospira interrogans serogroup Icterohaemorrhagiae serovar Lai (strain 56601).